A 161-amino-acid polypeptide reads, in one-letter code: Probable calcium-binding protein CML16 (161 aa).

EF-hand domains lie at 8–43 (DQIK…LGIK), 44–79 (PRGD…DINE), 83–118 (INQE…MGHP), and 119–154 (LTYR…SAAD). Ca(2+) is bound by residues aspartate 21, aspartate 23, aspartate 25, serine 27, glutamate 32, aspartate 57, asparagine 59, asparagine 61, serine 63, glutamate 68, aspartate 96, aspartate 98, asparagine 100, serine 102, glutamate 107, aspartate 132, asparagine 134, aspartate 136, and glutamate 143.

Potential calcium sensor. This chain is Probable calcium-binding protein CML16 (CML16), found in Arabidopsis thaliana (Mouse-ear cress).